The chain runs to 1160 residues: DNA polymerase III subunit alpha (1160 aa).

It belongs to the DNA polymerase type-C family. DnaE subfamily. The DNA polymerase holoenzyme is a complex that contains 10 different types of subunits. These subunits are organized into 3 functionally essential subassemblies: the pol III core, the beta sliding clamp processivity factor and the clamp-loading complex. The pol III core (subunits alpha,epsilon and theta) contains the polymerase and the 3'-5' exonuclease proofreading activities. The polymerase is tethered to the template via the sliding clamp processivity factor. The clamp-loading complex assembles the beta processivity factor onto the primer template and plays a central role in the organization and communication at the replication fork. This complex contains delta, delta', psi and chi, and copies of either or both of two different DnaX proteins, gamma and tau. The composition of the holoenzyme is, therefore: (alpha,epsilon,theta)[2]-(gamma/tau)[3]-delta,delta', psi,chi-beta[4].

The protein localises to the cytoplasm. The catalysed reaction is DNA(n) + a 2'-deoxyribonucleoside 5'-triphosphate = DNA(n+1) + diphosphate. Its function is as follows. DNA polymerase III is a complex, multichain enzyme responsible for most of the replicative synthesis in bacteria. This DNA polymerase also exhibits 3' to 5' exonuclease activity. The alpha chain is the DNA polymerase. This is DNA polymerase III subunit alpha (dnaE) from Escherichia coli O157:H7.